Consider the following 75-residue polypeptide: Translation initiation factor IF-1, chloroplastic (75 aa).

The 72-residue stretch at 1–72 folds into the S1-like domain; sequence MKKQNLIHAE…TKGRIIYRLS (72 aa).

The protein belongs to the IF-1 family. As to quaternary structure, component of the 30S ribosomal translation pre-initiation complex which assembles on the 30S ribosome in the order IF-2 and IF-3, IF-1 and N-formylmethionyl-tRNA(fMet); mRNA recruitment can occur at any time during PIC assembly.

The protein localises to the plastid. Its subcellular location is the chloroplast. Functionally, one of the essential components for the initiation of protein synthesis. Stabilizes the binding of IF-2 and IF-3 on the 30S subunit to which N-formylmethionyl-tRNA(fMet) subsequently binds. Helps modulate mRNA selection, yielding the 30S pre-initiation complex (PIC). Upon addition of the 50S ribosomal subunit IF-1, IF-2 and IF-3 are released leaving the mature 70S translation initiation complex. This chain is Translation initiation factor IF-1, chloroplastic, found in Pinus koraiensis (Korean pine).